We begin with the raw amino-acid sequence, 1853 residues long: Cellulosomal-scaffolding protein A (1853 aa).

The first 28 residues, 1–28, serve as a signal peptide directing secretion; that stretch reads MRKVISMLLVVAMLTTIFAAMIPQTVSA. 2 Cohesin domains span residues 29–182 and 183–322; these read ATMT…VPSD and GVVV…VNVG. Linker (Pro/Thr-rich) regions lie at residues 323–363 and 523–559; these read NATP…PANT and GGSV…SDDP. Residues 323-364 are compositionally biased toward low complexity; it reads NATPTKGATPTNTATPTKSATATPTRPSVPTNTPTNTPANTP. Disordered regions lie at residues 323-367 and 525-559; these read NATP…PVSG and SVVP…SDDP. Residues 365–523 form the CBM3 domain; the sequence is VSGNLKVEFY…GVLVWGKEPG (159 aa). The segment covering 525–555 has biased composition (low complexity); it reads SVVPSTQPVTTPPATTKPPATTKPPATTIPP. Cohesin domains are found at residues 560 to 704, 724 to 866, 889 to 1031, 1054 to 1196, 1219 to 1361, 1384 to 1526, and 1548 to 1690; these read NAIK…NVGD, AVRI…VNVG, and KLTL…VLVT. Residues 1785–1852 form the Dockerin domain; the sequence is IMMWVGDIVK…FGATSSDYDA (68 aa).

O-glycosylated on most but not all Thr residues of the linker units. The reducing sugar is galactopyranose.

The protein localises to the secreted. In terms of biological role, acts as a scaffolding protein in the cellulosome. It promotes binding of cellulose to the catalytic domains of the cellulolytic enzymes. The polypeptide is Cellulosomal-scaffolding protein A (cipA) (Acetivibrio thermocellus (strain ATCC 27405 / DSM 1237 / JCM 9322 / NBRC 103400 / NCIMB 10682 / NRRL B-4536 / VPI 7372) (Clostridium thermocellum)).